The following is an 865-amino-acid chain: Adenylate cyclase (865 aa).

The segment at 1 to 540 (MYLYIETLKQ…DISSHFPIRL (540 aa)) is catalytic. Residues 546-865 (KALYSPCEIR…FNDYQAVHHH (320 aa)) are regulatory.

This sequence belongs to the adenylyl cyclase class-1 family.

The protein localises to the cytoplasm. It carries out the reaction ATP = 3',5'-cyclic AMP + diphosphate. This chain is Adenylate cyclase (cya), found in Proteus mirabilis.